Consider the following 279-residue polypeptide: Acetylglutamate kinase (279 aa).

Substrate-binding positions include 64 to 65 (GG), Arg-86, and Asn-177.

It belongs to the acetylglutamate kinase family. ArgB subfamily.

It localises to the cytoplasm. The catalysed reaction is N-acetyl-L-glutamate + ATP = N-acetyl-L-glutamyl 5-phosphate + ADP. Its pathway is amino-acid biosynthesis; L-arginine biosynthesis; N(2)-acetyl-L-ornithine from L-glutamate: step 2/4. Catalyzes the ATP-dependent phosphorylation of N-acetyl-L-glutamate. The protein is Acetylglutamate kinase of Campylobacter jejuni subsp. doylei (strain ATCC BAA-1458 / RM4099 / 269.97).